Consider the following 247-residue polypeptide: ATP synthase subunit a, chloroplastic (247 aa).

Transmembrane regions (helical) follow at residues 38-58 (QVLITSWVVIAILLGSASIAV), 95-115 (VPFIGTMFLFIFVSNWSGALL), 134-154 (INTTVALALLTSVAYFYAGLT), 199-219 (LVVVVLVSLVPLVVPIPVMFL), and 220-240 (GLFTSGIQALIFATLAAAYIG).

The protein belongs to the ATPase A chain family. In terms of assembly, F-type ATPases have 2 components, CF(1) - the catalytic core - and CF(0) - the membrane proton channel. CF(1) has five subunits: alpha(3), beta(3), gamma(1), delta(1), epsilon(1). CF(0) has four main subunits: a, b, b' and c.

It is found in the plastid. It localises to the chloroplast thylakoid membrane. Functionally, key component of the proton channel; it plays a direct role in the translocation of protons across the membrane. This chain is ATP synthase subunit a, chloroplastic, found in Eucalyptus globulus subsp. globulus (Tasmanian blue gum).